The chain runs to 79 residues: RNA-binding protein Hfq (79 aa).

Residues 10 to 70 enclose the Sm domain; the sequence is DVFLNTVRKQ…ISTIMPGQPV (61 aa).

This sequence belongs to the Hfq family. In terms of assembly, homohexamer.

In terms of biological role, RNA chaperone that binds small regulatory RNA (sRNAs) and mRNAs to facilitate mRNA translational regulation in response to envelope stress, environmental stress and changes in metabolite concentrations. Also binds with high specificity to tRNAs. This Bartonella tribocorum (strain CIP 105476 / IBS 506) protein is RNA-binding protein Hfq.